The sequence spans 20 residues: Equinatoxin-1 (20 aa).

A plays an important role in the hemolytic activity region spans residues 3–12; the sequence is AVAGAVIEGA. The N-terminal region stretch occupies residues 11–20; the sequence is GASLTFNVLQ.

The protein belongs to the actinoporin family. Sea anemone subfamily. In terms of assembly, octamer or nonamer in membranes. Monomer in the soluble state.

It localises to the secreted. It is found in the nematocyst. The protein resides in the target cell membrane. Its function is as follows. Pore-forming protein that forms cations-selective hydrophilic pores of around 1 nm and causes cardiac stimulation and cytolysis. Pore formation is a multi-step process that involves specific recognition of membrane sphingomyelin (but neither cholesterol nor phosphatidylcholine) using aromatic rich region and adjacent phosphocholine (POC) binding site, firm binding to the membrane (mainly driven by hydrophobic interactions) accompanied by the transfer of the N-terminal region to the lipid-water interface and finally pore formation after oligomerization of monomers. Cytolytic effects include red blood cells hemolysis, platelet aggregation and lysis, cytotoxic and cytostatic effects on fibroblasts. Lethality in mammals has been ascribed to severe vasospasm of coronary vessels, cardiac arrhythmia, and inotropic effects. The protein is Equinatoxin-1 of Actinia equina (Beadlet anemone).